A 431-amino-acid polypeptide reads, in one-letter code: MIHTMIAPRRLRGIIDLPGDKSISHRAVLLNAIATGAAEVANFLTGADCLSTIACVQALGVRVERHEDTVRVFGAGLRSLREPVDVLDCGNSGTTLRLLTGMLAGQEGIFAVLTGDASLRSRPQQRIVAPLRALGATLDGRDRGNRAPLVVRGAYLHGGAYDLPIASAQVKSALLLAALFGDGTLTLTGRTDGRDHTERMLAAMGATITVDGQTIRLTPPDRSEALHPLSLRVPGDPSSATFWWVAAALHPDAELTTTGVCLNPTRTGALDALRAMGAQIDVANQRVEGGEPVGDVTVRSSSLHGIVIEGALIPRLIDELPVLALAAACAEGETIIRDAQELRVKETDRIATVVAGLTALGAVVEPTEDGMIIAGGGNLRGATLESHGDHRLAMTWAIAGLVGAGETTLHGAEAVDVSYPEFWNVLRRIRE.

3-phosphoshikimate-binding residues include lysine 21, serine 22, and arginine 26. Residue lysine 21 coordinates phosphoenolpyruvate. Phosphoenolpyruvate contacts are provided by glycine 93 and arginine 122. 3-phosphoshikimate-binding residues include serine 167, glutamine 169, aspartate 318, and lysine 345. Glutamine 169 is a binding site for phosphoenolpyruvate. Aspartate 318 (proton acceptor) is an active-site residue. Phosphoenolpyruvate contacts are provided by arginine 349 and arginine 391.

It belongs to the EPSP synthase family. As to quaternary structure, monomer.

Its subcellular location is the cytoplasm. It catalyses the reaction 3-phosphoshikimate + phosphoenolpyruvate = 5-O-(1-carboxyvinyl)-3-phosphoshikimate + phosphate. The protein operates within metabolic intermediate biosynthesis; chorismate biosynthesis; chorismate from D-erythrose 4-phosphate and phosphoenolpyruvate: step 6/7. Catalyzes the transfer of the enolpyruvyl moiety of phosphoenolpyruvate (PEP) to the 5-hydroxyl of shikimate-3-phosphate (S3P) to produce enolpyruvyl shikimate-3-phosphate and inorganic phosphate. This is 3-phosphoshikimate 1-carboxyvinyltransferase from Roseiflexus castenholzii (strain DSM 13941 / HLO8).